The primary structure comprises 266 residues: Trypsin Blo t 3 (266 aa).

The first 15 residues, 1–15 (MKVLVLFCLVSLAAA), serve as a signal peptide directing secretion. The propeptide occupies 16-35 (GPLKDALNKAQVDAFYAEGY). The Peptidase S1 domain maps to 36-260 (IVDGSNAADG…RVGNYISWIK (225 aa)). Cys60 and Cys76 are disulfide-bonded. Catalysis depends on charge relay system residues His75 and Asp120. Disulfide bonds link Cys187–Cys204 and Cys216–Cys240. Ser220 (charge relay system) is an active-site residue.

It belongs to the peptidase S1 family.

It is found in the secreted. It carries out the reaction Preferential cleavage: Arg-|-Xaa, Lys-|-Xaa.. The protein is Trypsin Blo t 3 of Blomia tropicalis (Mite).